Reading from the N-terminus, the 458-residue chain is UDP-N-acetylmuramate--L-alanine ligase (458 aa).

115 to 121 (GSHGKTT) serves as a coordination point for ATP.

Belongs to the MurCDEF family.

The protein localises to the cytoplasm. It carries out the reaction UDP-N-acetyl-alpha-D-muramate + L-alanine + ATP = UDP-N-acetyl-alpha-D-muramoyl-L-alanine + ADP + phosphate + H(+). Its pathway is cell wall biogenesis; peptidoglycan biosynthesis. Its function is as follows. Cell wall formation. This chain is UDP-N-acetylmuramate--L-alanine ligase, found in Anaeromyxobacter dehalogenans (strain 2CP-C).